Reading from the N-terminus, the 1324-residue chain is MTEKKPIFFNRIIDKKGLRDLIAWSFSNFGTARTAEMADKIKDLGFHYATRAGVSISVDDLLVPPKKQELLEAAEKEIKTAQERYSRGEITEVERFQKVIDTWNSTNEELKNEVVRHFRNTDVLNSVYMMAFSGARGNLSQVRQLVGMRGLMANPQGEIIDLPIKTNFREGLTVTEYIISSYGARKGLVDTALRTADSGYLTRRLVDVSQDVIIREEDCETERGITLRSMTVGDKVLALQDRLLGRVVLNDVRHPQTGEVLVAKNQAISADLAKKIVDAGIEEVVVRSPLTCEATGSVCRLCYGWSLAHARLVDMGEAVGIIAAQSIGEPGTQLTMRTFHTGGVFTGEVARQERAPFAGTVEYGKKLRVRPYRTRHGDDAFIVETAGKLVVKGGQQRQEFDLSQGSIVLVADGETVAAGQLLAEVAQAARSVRKATEKVTKDVASDLAGQVKFVNLDAEEKRDRQGTTTRIAPKGGLIWVLSGEVYNLPPGAEPVVKNGDRIEAGAVLAETTVKTEHGGVVRLPEQQDSKGGREVEIITASVMLDKAKVLKETQQGREHYIIETATGQRFSLKAAPGTKVANGQVVAELIDDRYHTTTGGILKYADIEVAKKGKAKQGYEVLKGGTLLWIPEETHEVNKDISLLMVEDNQYVEAGTEVVKDIFCQNSGVVEVIQKNDILREIIIKPGELHLVDDPEAARLKHGTLARPGEEVLPGLVVDTLSQVDYLEDTPEGPAILLRPVQEFSVPDEPSVPSQDSSDGSGQSIRLRAVQRLPYKHDERVKSVDGVDLLRTQLVLEIGSEAPQLAADIEIVTDEVDPEAQRLQLVILESLIIRRDIAADQTQGSTFTSLLVKDGDHIGPGAVIARTDIKAKQAGEVQGIVRSGESVRRILVVTDSDRLRVETNGAKPTVKVGDLVRPGDELAKGVTAPETAAVMAVADDHVILRLARPYLVSPGAVLQIEEGDLVQRGDNLALLVFERAKTGDIIQGLPRIEELLEARHPKEKCVLAVRPGTCQVTYNSDDSVEIKVIEEDGTIQEYPVLPGQNPLVVDGQKVNLADPLTDGPVDPHDILSIYFEYYKPQGLLKAAQTSLEKVQSFLVNEVQSVYLSQGIEIADKHIEVIVRQMTSKVRIDDAGDTILLSGELMTLRQAEQANEPMALTGGAPAQYTPVLLGITKASLNTDSFISAASFQETTRVLTEAAIEGKSDWLRGLKENVIIGRLIPAGTGFNSYEESSNGDEEWEEGEDRLGQTHVISPEPESPKMTVNVTADLGEDVLIDDETAPHVIEKITGGARDFEFASSDVEEDELTEEDDDYGDEEEEDAF.

Zn(2+) contacts are provided by cysteine 219, cysteine 292, cysteine 299, and cysteine 302. Positions 1293–1324 (ARDFEFASSDVEEDELTEEDDDYGDEEEEDAF) are disordered. Acidic residues predominate over residues 1302–1324 (DVEEDELTEEDDDYGDEEEEDAF).

The protein belongs to the RNA polymerase beta' chain family. RpoC2 subfamily. In terms of assembly, in cyanobacteria the RNAP catalytic core is composed of 2 alpha, 1 beta, 1 beta', 1 gamma and 1 omega subunit. When a sigma factor is associated with the core the holoenzyme is formed, which can initiate transcription. The cofactor is Zn(2+).

The enzyme catalyses RNA(n) + a ribonucleoside 5'-triphosphate = RNA(n+1) + diphosphate. Its function is as follows. DNA-dependent RNA polymerase catalyzes the transcription of DNA into RNA using the four ribonucleoside triphosphates as substrates. This is DNA-directed RNA polymerase subunit beta' from Thermosynechococcus vestitus (strain NIES-2133 / IAM M-273 / BP-1).